Reading from the N-terminus, the 376-residue chain is MATVALPDWTRAVVKVGSALVAPDDRGCSTTHLLPIARFVIQSRRQGKEVILVSSGAVAAGLAEQGRGGPGTGLSIPERQALAALGQPLLMAHWRRLFDVPCAQVLLTYDDLQRRARFVNAKNTIAELLDRDTLPIVNENDTVATEELRVGDNDNLAAYVAVLAEADLLVICSDVDGLYTADPHDDPDAERLPAVDAITDEIYDMVGPSHRKVATGGMQTKVEAAEKATDRGIDTVLVNGTKGGHLDALGRGEMPGTLFRQAEQPLPARKHWMLHALPSAGRLTVDAGAADALRHEGASLLPSGIVAVEGRFARGDAVEIAVEKEGNRTRVAKGITQYGAADLERIQGRQSHAIAEVLDEAPADYVVHRDDLVVEA.

Lys-15 lines the ATP pocket. Positions 55, 141, and 153 each coordinate substrate. Residues 173-174 (SD) and 215-221 (TGGMQTK) contribute to the ATP site. Residues 280–361 (AGRLTVDAGA…HAIAEVLDEA (82 aa)) form the PUA domain.

Belongs to the glutamate 5-kinase family.

The protein localises to the cytoplasm. It carries out the reaction L-glutamate + ATP = L-glutamyl 5-phosphate + ADP. It participates in amino-acid biosynthesis; L-proline biosynthesis; L-glutamate 5-semialdehyde from L-glutamate: step 1/2. Its function is as follows. Catalyzes the transfer of a phosphate group to glutamate to form L-glutamate 5-phosphate. This Salinibacter ruber (strain DSM 13855 / M31) protein is Glutamate 5-kinase.